Reading from the N-terminus, the 525-residue chain is Anti-silencing protein 2 (525 aa).

The segment at 467 to 525 (LPRVPTDSPQLPSKDKSQETAKKDDRPKLVANEPVTLDTSTPPVAQSLADSKHCSGLHK) is disordered. The span at 479-494 (SKDKSQETAKKDDRPK) shows a compositional bias: basic and acidic residues.

Its function is as follows. Derepression of silent mating type loci when overexpressed. This is Anti-silencing protein 2 (ASF2) from Saccharomyces cerevisiae (strain ATCC 204508 / S288c) (Baker's yeast).